Consider the following 1050-residue polypeptide: Ankyrin repeat domain-containing protein 27 (1050 aa).

Residues 1 to 372 (MALYDEDLLK…RQGSLSAKPP (372 aa)) are sufficient for GEF activity towards RAB21. One can recognise a VPS9 domain in the interval 233 to 371 (ASEDAAFNKI…IRQGSLSAKP (139 aa)). ANK repeat units follow at residues 396 to 426 (SPTD…DKDT), 462 to 491 (RGHT…MVNA), 495 to 524 (HGAT…SAEV), 528 to 560 (NGNT…RLDI), 564 to 593 (KGDT…STEI), and 597 to 627 (LKET…RQKS). Residues 396 to 460 (SPTDCLFKHI…PSVVTPFSRD (65 aa)) form a sufficient for interaction with VPS29 region. Positions 451-600 (PSVVTPFSRD…TEIQNRLKET (150 aa)) are interaction with RAB38. An interaction with RAB32 region spans residues 451–730 (PSVVTPFSRD…APAQKRLAKV (280 aa)). Residues 625–665 (QKSSEAPVQSPQRSVDSISQESSTSSFSSMSASSRQEETKK) are disordered. Positions 628 to 637 (SEAPVQSPQR) are enriched in polar residues. Residues 638–658 (SVDSISQESSTSSFSSMSASS) are compositionally biased toward low complexity. The required for interaction with VAMP7 stretch occupies residues 658 to 707 (SRQEETKKDYREVEKLLRAVADGDLEMVRYLLEWTEEDLEDAEDTVSAAD). ANK repeat units follow at residues 668–698 (REVE…DLED), 743–772 (DGSS…NAGA), 776–805 (DQAV…KPNK), 809–838 (SGNT…SINA), and 842–871 (KGNT…SVQV). The segment at 692 to 746 (TEEDLEDAEDTVSAADPEFCHPLCQCPKCAPAQKRLAKVPASGLGVNVTSQDGSS) is sufficient for interaction with VPS29. Phosphoserine occurs at positions 962 and 970. The interval 987–1050 (PAQSGSHAAE…TPQEVSASRS (64 aa)) is disordered. Residues 994–1004 (AAEKGNSDWPE) show a composition bias toward basic and acidic residues. Residue Thr1023 is modified to Phosphothreonine. The segment covering 1040-1050 (STPQEVSASRS) has biased composition (polar residues).

As to quaternary structure, interacts with RAB21 (GDP-bound form), VPS29, RAB32 (GTP-bound form), RAB38 (GTP-bound form), VAMP7, KIF5A, KIF5C, GOLGA4. Interacts with low affinity with RAB5. ANKRD27:RAB32 heterodimers can homodimerize to form tetramers. Can interact with RAB38 or RAB32, VPS29 and VAMP7 simultaneously. A decreased interaction with RAB32 seen in the presence of SGSM2.

Its subcellular location is the early endosome. It localises to the late endosome. The protein localises to the cytoplasmic vesicle membrane. The protein resides in the lysosome. It is found in the cell membrane. Its subcellular location is the melanosome. In terms of biological role, may be a guanine exchange factor (GEF) for Rab21, Rab32 and Rab38 and regulate endosome dynamics. May regulate the participation of VAMP7 in membrane fusion events; in vitro inhibits VAMP7-mediated SNARE complex formation by trapping VAMP7 in a closed, fusogenically inactive conformation. Involved in peripheral melanosomal distribution of TYRP1 in melanocytes; the function, which probably is implicating vesicle-trafficking, includes cooperation with Rab32, Rab38 and VAMP7. Involved in the regulation of neurite growth; the function seems to require its GEF activity, probably towards Rab21, and VAMP7 but not Rab32/38. Proposed to be involved in Golgi sorting of VAMP7 and transport of VAMP7 vesicles to the cell surface; the function seems to implicate kinesin heavy chain isoform 5 proteins, GOLGA4, RAB21 and MACF1. Required for the colocalization of VAMP7 and Rab21, probably on TGN sites. Involved in GLUT1 endosome-to-plasma membrane trafficking; the function is dependent of association with VPS29. Regulates the proper trafficking of melanogenic enzymes TYR, TYRP1 and DCT/TYRP2 to melanosomes in melanocytes. This is Ankyrin repeat domain-containing protein 27 (ANKRD27) from Homo sapiens (Human).